A 227-amino-acid polypeptide reads, in one-letter code: Cytidylate kinase (227 aa).

12–20 (GPSGAGKGT) is an ATP binding site.

The protein belongs to the cytidylate kinase family. Type 1 subfamily.

Its subcellular location is the cytoplasm. It catalyses the reaction CMP + ATP = CDP + ADP. The catalysed reaction is dCMP + ATP = dCDP + ADP. The protein is Cytidylate kinase of Sodalis glossinidius (strain morsitans).